The sequence spans 112 residues: Large ribosomal subunit protein P2A (112 aa).

The interval 83–112 is disordered; sequence GAAPAAEAKKEEKVEEKEESDDDMGFSLFD. Residues 89–98 are compositionally biased toward basic and acidic residues; that stretch reads EAKKEEKVEE.

It belongs to the eukaryotic ribosomal protein P1/P2 family. As to quaternary structure, P1 and P2 exist as dimers at the large ribosomal subunit. Post-translationally, phosphorylated.

Plays an important role in the elongation step of protein synthesis. The sequence is that of Large ribosomal subunit protein P2A (RPP2A) from Zea mays (Maize).